The sequence spans 392 residues: Heat-inducible transcription repressor HrcA (392 aa).

The protein belongs to the HrcA family.

Functionally, negative regulator of class I heat shock genes (grpE-dnaK-dnaJ and groELS operons). Prevents heat-shock induction of these operons. The protein is Heat-inducible transcription repressor HrcA of Chlamydia trachomatis serovar D (strain ATCC VR-885 / DSM 19411 / UW-3/Cx).